We begin with the raw amino-acid sequence, 276 residues long: Shikimate dehydrogenase (NADP(+)) (276 aa).

Shikimate contacts are provided by residues 19–21 and T66; that span reads SKS. K70 acts as the Proton acceptor in catalysis. D82 provides a ligand contact to NADP(+). Residues N91 and D107 each contribute to the shikimate site. NADP(+) contacts are provided by residues 133–137, 157–162, and L222; these read GAGGA and NRTRSR. Y224 serves as a coordination point for shikimate. Position 245 (G245) interacts with NADP(+).

The protein belongs to the shikimate dehydrogenase family. Homodimer.

It catalyses the reaction shikimate + NADP(+) = 3-dehydroshikimate + NADPH + H(+). It functions in the pathway metabolic intermediate biosynthesis; chorismate biosynthesis; chorismate from D-erythrose 4-phosphate and phosphoenolpyruvate: step 4/7. Its function is as follows. Involved in the biosynthesis of the chorismate, which leads to the biosynthesis of aromatic amino acids. Catalyzes the reversible NADPH linked reduction of 3-dehydroshikimate (DHSA) to yield shikimate (SA). The sequence is that of Shikimate dehydrogenase (NADP(+)) from Ruegeria sp. (strain TM1040) (Silicibacter sp.).